A 161-amino-acid polypeptide reads, in one-letter code: Transcriptional repressor NrdR (161 aa).

A zinc finger lies at 3–34 (CPFCGKYDTKVTDSRLVAEGDQVRRRRQCNDC). Residues 49–139 (PRVIKGDGSR…VYRRFQDLDE (91 aa)) form the ATP-cone domain.

The protein belongs to the NrdR family. The cofactor is Zn(2+).

Its function is as follows. Negatively regulates transcription of bacterial ribonucleotide reductase nrd genes and operons by binding to NrdR-boxes. The sequence is that of Transcriptional repressor NrdR from Chromohalobacter salexigens (strain ATCC BAA-138 / DSM 3043 / CIP 106854 / NCIMB 13768 / 1H11).